A 610-amino-acid polypeptide reads, in one-letter code: UvrABC system protein C (610 aa).

A GIY-YIG domain is found at 13–91; the sequence is HLPGVYRMYD…IKENQPKYNV (79 aa). Residues 201-236 form the UVR domain; the sequence is GQVVEHLVQKMENAAQELDFEAAARFRDQIQSVRAV.

Belongs to the UvrC family. In terms of assembly, interacts with UvrB in an incision complex.

The protein localises to the cytoplasm. The UvrABC repair system catalyzes the recognition and processing of DNA lesions. UvrC both incises the 5' and 3' sides of the lesion. The N-terminal half is responsible for the 3' incision and the C-terminal half is responsible for the 5' incision. The sequence is that of UvrABC system protein C from Actinobacillus pleuropneumoniae serotype 7 (strain AP76).